A 195-amino-acid polypeptide reads, in one-letter code: Probable GTP-binding protein EngB (195 aa).

Residues 24–195 (GLTEVALSGR…EIWNFIETYI (172 aa)) enclose the EngB-type G domain. Residues 32-39 (GRSNVGKS), 59-63 (GKTQT), 77-80 (DVPG), 144-147 (TKED), and 176-178 (YSS) contribute to the GTP site. The Mg(2+) site is built by S39 and T61.

The protein belongs to the TRAFAC class TrmE-Era-EngA-EngB-Septin-like GTPase superfamily. EngB GTPase family. Mg(2+) is required as a cofactor.

In terms of biological role, necessary for normal cell division and for the maintenance of normal septation. The polypeptide is Probable GTP-binding protein EngB (Staphylococcus epidermidis (strain ATCC 35984 / DSM 28319 / BCRC 17069 / CCUG 31568 / BM 3577 / RP62A)).